Consider the following 99-residue polypeptide: Aspartyl/glutamyl-tRNA(Asn/Gln) amidotransferase subunit C (99 aa).

The protein belongs to the GatC family. In terms of assembly, heterotrimer of A, B and C subunits.

It catalyses the reaction L-glutamyl-tRNA(Gln) + L-glutamine + ATP + H2O = L-glutaminyl-tRNA(Gln) + L-glutamate + ADP + phosphate + H(+). The enzyme catalyses L-aspartyl-tRNA(Asn) + L-glutamine + ATP + H2O = L-asparaginyl-tRNA(Asn) + L-glutamate + ADP + phosphate + 2 H(+). Allows the formation of correctly charged Asn-tRNA(Asn) or Gln-tRNA(Gln) through the transamidation of misacylated Asp-tRNA(Asn) or Glu-tRNA(Gln) in organisms which lack either or both of asparaginyl-tRNA or glutaminyl-tRNA synthetases. The reaction takes place in the presence of glutamine and ATP through an activated phospho-Asp-tRNA(Asn) or phospho-Glu-tRNA(Gln). In Mycobacterium marinum (strain ATCC BAA-535 / M), this protein is Aspartyl/glutamyl-tRNA(Asn/Gln) amidotransferase subunit C.